Consider the following 313-residue polypeptide: Ribosomal protein L11 methyltransferase (313 aa).

The S-adenosyl-L-methionine site is built by threonine 164, glycine 185, aspartate 207, and asparagine 249.

This sequence belongs to the methyltransferase superfamily. PrmA family.

Its subcellular location is the cytoplasm. It carries out the reaction L-lysyl-[protein] + 3 S-adenosyl-L-methionine = N(6),N(6),N(6)-trimethyl-L-lysyl-[protein] + 3 S-adenosyl-L-homocysteine + 3 H(+). Methylates ribosomal protein L11. The sequence is that of Ribosomal protein L11 methyltransferase from Clostridium botulinum (strain Eklund 17B / Type B).